Here is a 286-residue protein sequence, read N- to C-terminus: ATP synthase gamma chain (286 aa).

It belongs to the ATPase gamma chain family. In terms of assembly, F-type ATPases have 2 components, CF(1) - the catalytic core - and CF(0) - the membrane proton channel. CF(1) has five subunits: alpha(3), beta(3), gamma(1), delta(1), epsilon(1). CF(0) has three main subunits: a, b and c.

It localises to the cell inner membrane. Produces ATP from ADP in the presence of a proton gradient across the membrane. The gamma chain is believed to be important in regulating ATPase activity and the flow of protons through the CF(0) complex. This is ATP synthase gamma chain from Shewanella piezotolerans (strain WP3 / JCM 13877).